The following is a 602-amino-acid chain: Probable pectinesterase/pectinesterase inhibitor 64 (602 aa).

Residues 36 to 56 (ILIIIAASCILLLLISLLIYA) traverse the membrane as a helical segment. The segment at 62–91 (SRNHHNPSHQTPTSDDHPPPETPPSPPPIA) is disordered. Positions 81 to 90 (PETPPSPPPI) are enriched in pro residues. The interval 87 to 237 (PPPIAQIRLA…VNLTGNALSM (151 aa)) is pectinesterase inhibitor 64. 5 N-linked (GlcNAc...) asparagine glycosylation sites follow: asparagine 98, asparagine 156, asparagine 212, asparagine 229, and asparagine 315. A pectinesterase 64 region spans residues 288-595 (DVTVCKNGGK…YSVANFIQAD (308 aa)). Substrate is bound by residues threonine 367 and glutamine 397. The active-site Proton donor; for pectinesterase activity is the aspartate 420. The cysteines at positions 434 and 454 are disulfide-linked. Aspartate 441 serves as the catalytic Nucleophile; for pectinesterase activity. Residues asparagine 492 and asparagine 496 are each glycosylated (N-linked (GlcNAc...) asparagine). Residues arginine 518 and tryptophan 520 each contribute to the substrate site.

In the N-terminal section; belongs to the PMEI family. The protein in the C-terminal section; belongs to the pectinesterase family. As to expression, expressed in siliques.

Its subcellular location is the membrane. It catalyses the reaction [(1-&gt;4)-alpha-D-galacturonosyl methyl ester](n) + n H2O = [(1-&gt;4)-alpha-D-galacturonosyl](n) + n methanol + n H(+). It participates in glycan metabolism; pectin degradation; 2-dehydro-3-deoxy-D-gluconate from pectin: step 1/5. Functionally, acts in the modification of cell walls via demethylesterification of cell wall pectin. The protein is Probable pectinesterase/pectinesterase inhibitor 64 (PME64) of Arabidopsis thaliana (Mouse-ear cress).